The chain runs to 60 residues: Naniproin (60 aa).

Disulfide bonds link cysteine 3–cysteine 21, cysteine 14–cysteine 38, cysteine 42–cysteine 53, and cysteine 54–cysteine 59.

Belongs to the three-finger toxin family. Short-chain subfamily. Type IA cytotoxin sub-subfamily. In terms of assembly, monomer in solution; Homodimer and oligomer in the presence of negatively charged lipids forming a pore with a size ranging between 20 and 30 angstroms. As to expression, expressed by the venom gland.

Its subcellular location is the secreted. The protein resides in the target cell membrane. Basic protein that binds to cell membrane and depolarizes cardiomyocytes. This cytotoxin also possesses lytic activity on many other cells, including red blood cells. Interaction with sulfatides in the cell membrane induces pore formation and cell internalization and is responsible for cytotoxicity in cardiomyocytes. It targets the mitochondrial membrane and induces mitochondrial swelling and fragmentation. Inhibits protein kinases C. It binds to the integrin alpha-V/beta-3 with a moderate affinity. The sequence is that of Naniproin from Naja nigricollis (Black-necked spitting cobra).